The primary structure comprises 233 residues: Small ribosomal subunit protein uS2 (233 aa).

The protein belongs to the universal ribosomal protein uS2 family.

In Bacillus anthracis, this protein is Small ribosomal subunit protein uS2.